The chain runs to 48 residues: Delta-actitoxin-Bcg1c (48 aa).

3 disulfide bridges follow: Cys-4-Cys-45, Cys-6-Cys-35, and Cys-28-Cys-46.

The protein localises to the secreted. The protein resides in the nematocyst. Functionally, binds specifically to voltage-gated sodium channels SCN1A/Nav1.1, thereby delaying their inactivation during signal transduction. The protein is Delta-actitoxin-Bcg1c of Bunodosoma cangicum (Sea anemone).